The sequence spans 115 residues: Large ribosomal subunit protein bL21 (115 aa).

This sequence belongs to the bacterial ribosomal protein bL21 family. Part of the 50S ribosomal subunit. Contacts protein L20.

In terms of biological role, this protein binds to 23S rRNA in the presence of protein L20. In Coxiella burnetii (strain Dugway 5J108-111), this protein is Large ribosomal subunit protein bL21.